A 230-amino-acid chain; its full sequence is Orotidine 5'-phosphate decarboxylase (230 aa).

Substrate is bound by residues D11, K34, 61–70 (DLKLHDIPNT), T117, R179, Q188, G208, and R209. The active-site Proton donor is K63.

This sequence belongs to the OMP decarboxylase family. Type 1 subfamily. In terms of assembly, homodimer.

The enzyme catalyses orotidine 5'-phosphate + H(+) = UMP + CO2. It participates in pyrimidine metabolism; UMP biosynthesis via de novo pathway; UMP from orotate: step 2/2. In terms of biological role, catalyzes the decarboxylation of orotidine 5'-monophosphate (OMP) to uridine 5'-monophosphate (UMP). The protein is Orotidine 5'-phosphate decarboxylase of Streptococcus equi subsp. zooepidemicus (strain MGCS10565).